Consider the following 115-residue polypeptide: DNA-binding protein APE_1087b (115 aa).

The protein belongs to the PDCD5 family.

This chain is DNA-binding protein APE_1087b, found in Aeropyrum pernix (strain ATCC 700893 / DSM 11879 / JCM 9820 / NBRC 100138 / K1).